Reading from the N-terminus, the 134-residue chain is DNA-binding protein inhibitor ID-2 (134 aa).

Serine 14 and serine 25 each carry phosphoserine. Positions serine 23–leucine 75 constitute a bHLH domain. A Nuclear export signal motif is present at residues leucine 106 to leucine 115.

Interacts with GATA4 and NKX2-5. Interacts with NR0B2. Interacts with CLOCK and BMAL1. Interacts with IFI204. Interacts with NEDD9/HEF1. Interacts with ASB4; this interaction promotes ID2 proteasomal degradation. Ubiquitinated in a ASB4-depedent manner, leading to proteasomal degradation. In terms of processing, phosphorylated in vitro by CDK1, PKA and PKC.

The protein resides in the cytoplasm. It is found in the nucleus. In terms of biological role, transcriptional regulator (lacking a basic DNA binding domain) which negatively regulates the basic helix-loop-helix (bHLH) transcription factors by forming heterodimers and inhibiting their DNA binding and transcriptional activity. Implicated in regulating a variety of cellular processes, including cellular growth, senescence, differentiation, apoptosis, angiogenesis, and neoplastic transformation. Inhibits skeletal muscle and cardiac myocyte differentiation. Regulates the circadian clock by repressing the transcriptional activator activity of the CLOCK-BMAL1 heterodimer. Restricts the CLOCK and BMAL1 localization to the cytoplasm. Plays a role in both the input and output pathways of the circadian clock: in the input component, is involved in modulating the magnitude of photic entrainment and in the output component, contributes to the regulation of a variety of liver clock-controlled genes involved in lipid metabolism. The sequence is that of DNA-binding protein inhibitor ID-2 (ID2) from Sus scrofa (Pig).